The following is a 537-amino-acid chain: Hexosyltransferase GAUT11 (537 aa).

Over 1–16 the chain is Cytoplasmic; it reads MRRWPVDHRRRGRRRL. The chain crosses the membrane as a helical; Signal-anchor for type II membrane protein span at residues 17-37; that stretch reads SSWIWFLLGSFSVAGLVLFIV. Topologically, residues 38 to 537 are lumenal; sequence QHYHHQQDPS…HPYLQDCVTA (500 aa). Residues asparagine 66, asparagine 247, asparagine 299, asparagine 403, asparagine 436, and asparagine 525 are each glycosylated (N-linked (GlcNAc...) asparagine).

It belongs to the glycosyltransferase 8 family. In terms of assembly, monomer. As to expression, expressed in roots, inflorescences, siliques, seeds, leaves and stems.

Its subcellular location is the golgi apparatus membrane. The catalysed reaction is [(1-&gt;4)-alpha-D-galacturonosyl](n) + UDP-alpha-D-galacturonate = [(1-&gt;4)-alpha-D-galacturonosyl](n+1) + UDP + H(+). It functions in the pathway glycan metabolism; pectin biosynthesis. Glycosyltransferase involved in pectin and/or xylans biosynthesis in cell walls. Required for the biosynthesis of pectin in seed coat epidermal (SCE) cells. Collaboratively with MUCI70, essential for the accumulation of seed mucilage, a gelatinous wall rich in unbranched rhamnogalacturonan I (RG I), and for shaping the surface morphology of seeds. Catalyzes homogalacturonan (HG) elongation by acting as an HG alpha-1,4 galacturonic acid transferase. The chain is Hexosyltransferase GAUT11 from Arabidopsis thaliana (Mouse-ear cress).